Consider the following 134-residue polypeptide: uncharacterized protein (134 aa).

Helical transmembrane passes span 21 to 41 (FSTT…LYLI), 52 to 72 (LVLL…TPYE), and 95 to 115 (IVMA…VYII).

It is found in the host membrane. This is an uncharacterized protein from Acidianus two-tailed virus (ATV).